A 313-amino-acid chain; its full sequence is C-type lectin domain-containing protein 162 (313 aa).

Residues 1–17 (MNIFTLLFIYFLSDTVA) form the signal peptide. Residues asparagine 28 and asparagine 41 are each glycosylated (N-linked (GlcNAc...) asparagine). The 118-residue stretch at 28–145 (NATGCFQFFR…DAMFLPFVCE (118 aa)) folds into the C-type lectin domain. A disulfide bridge connects residues cysteine 49 and cysteine 144. A glycan (N-linked (GlcNAc...) asparagine) is linked at asparagine 213. The tract at residues 244 to 313 (VSQTETEMSR…RSKTIQISRG (70 aa)) is disordered. The span at 250–259 (EMSRSRKEKE) shows a compositional bias: basic and acidic residues. Residues asparagine 279 and asparagine 300 are each glycosylated (N-linked (GlcNAc...) asparagine). The segment covering 291–304 (SKEKREREENETIR) has biased composition (basic and acidic residues).

It is found in the secreted. The chain is C-type lectin domain-containing protein 162 (clec-162) from Caenorhabditis elegans.